A 441-amino-acid chain; its full sequence is Homogentisate 1,2-dioxygenase (441 aa).

Residue His287 is the Proton acceptor of the active site. His330 and Glu336 together coordinate Fe cation. Homogentisate is bound by residues Tyr345 and His366. A Fe cation-binding site is contributed by His366.

This sequence belongs to the homogentisate dioxygenase family. As to quaternary structure, hexamer; dimer of trimers. The cofactor is Fe cation.

The enzyme catalyses homogentisate + O2 = 4-maleylacetoacetate + H(+). It functions in the pathway amino-acid degradation; L-phenylalanine degradation; acetoacetate and fumarate from L-phenylalanine: step 4/6. Involved in the catabolism of homogentisate (2,5-dihydroxyphenylacetate or 2,5-OH-PhAc), a central intermediate in the degradation of phenylalanine and tyrosine. Catalyzes the oxidative ring cleavage of the aromatic ring of homogentisate to yield maleylacetoacetate. In Xanthomonas oryzae pv. oryzae (strain KACC10331 / KXO85), this protein is Homogentisate 1,2-dioxygenase.